The sequence spans 670 residues: DNA ligase (670 aa).

NAD(+) is bound by residues 32 to 36 (DAEYD), 81 to 82 (SL), and glutamate 113. Lysine 115 (N6-AMP-lysine intermediate) is an active-site residue. Residues arginine 136, glutamate 173, lysine 290, and lysine 314 each contribute to the NAD(+) site. Cysteine 408, cysteine 411, cysteine 426, and cysteine 432 together coordinate Zn(2+). One can recognise a BRCT domain in the interval 592–670 (EIDSPFAGKT…EAEMIRLLGE (79 aa)).

It belongs to the NAD-dependent DNA ligase family. LigA subfamily. Mg(2+) is required as a cofactor. It depends on Mn(2+) as a cofactor.

It catalyses the reaction NAD(+) + (deoxyribonucleotide)n-3'-hydroxyl + 5'-phospho-(deoxyribonucleotide)m = (deoxyribonucleotide)n+m + AMP + beta-nicotinamide D-nucleotide.. In terms of biological role, DNA ligase that catalyzes the formation of phosphodiester linkages between 5'-phosphoryl and 3'-hydroxyl groups in double-stranded DNA using NAD as a coenzyme and as the energy source for the reaction. It is essential for DNA replication and repair of damaged DNA. This is DNA ligase from Yersinia pseudotuberculosis serotype O:1b (strain IP 31758).